The sequence spans 1319 residues: ERAD-associated E3 ubiquitin-protein ligase DOA10 (1319 aa).

The residue at position 1 (Met-1) is an N-acetylmethionine. Over 1–131 (MDVDSDVNVS…LTFFEKARLA (131 aa)) the chain is Cytoplasmic. An RING-CH-type zinc finger spans residues 31 to 100 (DDAPSGATCR…DICHYPIQFK (70 aa)). The Zn(2+) site is built by Cys-39, Cys-42, Cys-56, Cys-58, His-66, Cys-69, Cys-90, and Cys-93. Residues 132 to 152 (LTIGLAAVLYIIGVPLVWNMF) traverse the membrane as a helical segment. Residues 153 to 203 (GKLYTMMLDGSSPYPGDFLKSLIYGYDQSATPELTTRAIFYQLLQNHSFTS) lie on the Lumenal side of the membrane. Residues 204 to 224 (LQFIMIVILHIALYFQYDMIV) form a helical membrane-spanning segment. At 225–468 (REDVFSKMVF…GPLVINLKLK (244 aa)) the chain is on the cytoplasmic side. Positions 291-306 (ADNNNNVINPRNDNVP) are enriched in low complexity. 2 disordered regions span residues 291 to 315 (ADNNNNVINPRNDNVPPQDPNDHRN) and 329 to 381 (EATE…EADY). The helical transmembrane segment at 469–489 (LLNVIAYFIIAVVFTAIYLAI) threads the bilayer. The Lumenal segment spans residues 490–491 (SY). A helical membrane pass occupies residues 492-512 (LFPTFIGFGLLKIYFGIFKVI). The Cytoplasmic segment spans residues 513–626 (LRGLCHLYYL…LFALKCTFKV (114 aa)). A helical transmembrane segment spans residues 627-647 (FTLFFIELAGFPILAGVMLDF). The Lumenal segment spans residues 648–660 (SLFCPILASNSRM). The helical transmembrane segment at 661-681 (LWVPSICAIWPPFSLFVYWTI) threads the bilayer. Over 682-739 (GTLYMYWFAKYIGMIRKNIIRPGVLFFIRSPEDPNIKILHDSLIHPMSIQLSRLCLSM) the chain is Cytoplasmic. Residues 740-760 (FIYAIFIVLGFGFHTRIFFPF) traverse the membrane as a helical segment. The Lumenal segment spans residues 761–777 (MLKSNLLSVPEAYKPTS). Residues 778–797 (IISWKFNTILLTLYFTKRIL) traverse the membrane as a helical segment. Residues 798 to 965 (ESSSYVKPLL…YVPPDFRLRY (168 aa)) lie on the Cytoplasmic side of the membrane. A helical transmembrane segment spans residues 966–986 (MTLLGLVWLFASILMLGVTFI). At 987 to 1019 (SQALINFVCSFGFLPVVKLLLGERNKVYVAWKE) the chain is on the lumenal side. Residues 1020–1040 (LSDISYSYLNIYYVCVGSVCL) form a helical membrane-spanning segment. At 1041 to 1113 (SKIAKDILHF…IFDSMLVKYN (73 aa)) the chain is on the cytoplasmic side. The helical transmembrane segment at 1114–1134 (LMVFIAIMIAVIRTMVSWVVL) threads the bilayer. At 1135–1168 (TDGILACYNYLTIRVFGNSSYTIGNSKWFKYDES) the chain is on the lumenal side. A helical membrane pass occupies residues 1169-1189 (LLFVVWIISSMVNFGTGYKSL). Topologically, residues 1190–1213 (KLFFRNRNTSKLNFLKTMALELFK) are cytoplasmic. A helical membrane pass occupies residues 1214–1234 (QGFLHMVIYVLPIIILSLVFL). Residues 1235–1270 (RDVSTKQIIDISHGSRSFTLSLNESFPTWTRMQDIY) are Lumenal-facing. A helical transmembrane segment spans residues 1271-1291 (FGLLIALESFTFFFQATVLFI). The Cytoplasmic segment spans residues 1292 to 1319 (QWFKSTVQNVKDEVYTKGRALENLPDES).

The protein belongs to the DOA10/MARCH6 family. As to quaternary structure, component of the DOA10 ubiquitin ligase complex which contains E3 ligase SSM4/DOA10 and CDC48-binding protein UBX2/SEL1. The DOA10 complex interacts with the heterotrimeric CDC48-NPL4-UFD1 ATPase complex which is recruited by UBX2/SEL1 via its interaction with CDC48. Interacts with its associated ubiquitin conjugating enzymes UBC6 and UBC7 with its membrane anchor CUE1. Interacts with PEX29.

It is found in the endoplasmic reticulum membrane. The protein resides in the nucleus inner membrane. The catalysed reaction is S-ubiquitinyl-[E2 ubiquitin-conjugating enzyme]-L-cysteine + [acceptor protein]-L-lysine = [E2 ubiquitin-conjugating enzyme]-L-cysteine + N(6)-ubiquitinyl-[acceptor protein]-L-lysine.. It functions in the pathway protein modification; protein ubiquitination. In terms of biological role, E3 ubiquitin-protein ligase which accepts ubiquitin specifically from endoplasmic reticulum-associated UBC6 and UBC7 E2 ligases, and transfers it to substrates promoting their degradation. Mediates the degradation of a broad range of substrates, including endoplasmic reticulum membrane proteins (ERQC), soluble nuclear proteins and soluble cytoplasmic proteins (CytoQC). Component of the DOA10 ubiquitin ligase complex, which is part of the ERAD-C pathway responsible for the rapid degradation of membrane proteins with misfolded cytoplasmic domains. ERAD-C substrates are ubiquitinated through DOA10 in conjunction with the E2 ubiquitin-conjugating enzymes UBC6 and UBC7-CUE1. Ubiquitinated substrates are then removed to the cytosol via the action of the UFD1-NPL4-CDC48/p97 (UNC) AAA ATPase complex and targeted to the proteasome. Also recognizes the N-terminally acetylated residue of proteins as degradation signal (degron). N-terminally acetylated target proteins include MATALPHA2, TBF1, SLK19, YMR090W, HIS3, HSP104, UBP6 and ARO8. Catalyzes ubiquitination of mislocalized tail-anchored proteins that are extracted from the mitochondrion membrane by MSP1: following extraction, mistargeted proteins are transferred to the endoplasmic reticulum, where they are ubiquitinated by DOA10 and degraded by the proteasome. In Saccharomyces cerevisiae (strain ATCC 204508 / S288c) (Baker's yeast), this protein is ERAD-associated E3 ubiquitin-protein ligase DOA10 (SSM4).